The primary structure comprises 733 residues: Ribosomal protein S6 kinase 2 alpha (733 aa).

Residues 18–38 (EDPENGHGSPEEGGRHTSKDE) are disordered. The Protein kinase 1 domain occupies 62-321 (FVLLKVLGQG…AEEIKRQPFF (260 aa)). Residues 68–76 (LGQGSFGKV) and Lys-94 each bind ATP. Catalysis depends on Asp-187, which acts as the Proton acceptor. Position 221 is a phosphoserine (Ser-221). An AGC-kinase C-terminal domain is found at 322 to 391 (STIDWNKLFR…VAPALVEEDA (70 aa)). Thr-359 bears the Phosphothreonine mark. Residue Ser-363 is modified to Phosphoserine. Position 380 is a phosphoserine; by autocatalysis (Ser-380). The Protein kinase 2 domain occupies 416-673 (YTVRETIGVG…AKQVLQHEWI (258 aa)). ATP contacts are provided by residues 422–430 (IGVGSYSVC) and Lys-445. Asp-533 acts as the Proton acceptor in catalysis. Residue Thr-571 is modified to Phosphothreonine. Ser-730 carries the post-translational modification Phosphoserine.

It belongs to the protein kinase superfamily. AGC Ser/Thr protein kinase family. S6 kinase subfamily. Mg(2+) is required as a cofactor. In terms of processing, autophosphorylated on Ser-380, as part of the activation process.

It carries out the reaction L-seryl-[protein] + ATP = O-phospho-L-seryl-[protein] + ADP + H(+). It catalyses the reaction L-threonyl-[protein] + ATP = O-phospho-L-threonyl-[protein] + ADP + H(+). Its activity is regulated as follows. Activated by multiple phosphorylations on threonine and serine residues. Its function is as follows. Serine/threonine kinase that may play a role in mediating the growth-factor and stress induced activation of transcription. This is Ribosomal protein S6 kinase 2 alpha (rps6ka) from Xenopus laevis (African clawed frog).